The chain runs to 314 residues: MEFSMNATVEQLAPVEQQATAGWVVAALYQFKEVQDPADLQQRLLDLVKTINLCGTLIVAGEGINGTVAGDREAIDTIHQFLLNEGFNAMEYKESHSSDKPFRKMKIKLKKEIVTLGVEVKPRDLVGHYLDPKEWNELIARDDVILIDTRNDYEYKAGTFKGAIDPKTETFREFPEYVKKELEQHKDKKIAMFCTGGIRCEKSTSLLLQEGFKEVYHLKGGILKYLEETPPDESLWEGECFVFDGRTAVTHGVEEGANIKCHACGWPLTPEESALPSYEHGVSCLYCIDKTTEKQKAGFRMRQSQIAAAKHKRL.

Residues 140–234 (ARDDVILIDT…YLEETPPDES (95 aa)) form the Rhodanese domain. Cys194 serves as the catalytic Cysteine persulfide intermediate.

Belongs to the TrhO family.

The enzyme catalyses uridine(34) in tRNA + AH2 + O2 = 5-hydroxyuridine(34) in tRNA + A + H2O. Functionally, catalyzes oxygen-dependent 5-hydroxyuridine (ho5U) modification at position 34 in tRNAs. This Acinetobacter baumannii (strain SDF) protein is tRNA uridine(34) hydroxylase.